The following is a 328-amino-acid chain: Protein phosphatase 1 regulatory inhibitor subunit PPP1R7 homolog (328 aa).

LRR repeat units follow at residues 13–36 (IGDS…VELP), 37–59 (PNLI…IAQL), 61–82 (TLKK…PLSH), 86–110 (LSDL…IFTK), 111–130 (LLVY…ISKA), 131–153 (SSTL…IEHL), 154–177 (HNLQ…NFTK), 179–196 (EELW…LCGL), 197–221 (KCIK…CVAL), 223–240 (ELYL…LSAL), 241–264 (VNLR…NLTK), 266–287 (EDLW…AVTG), and 289–312 (KEKL…VAAV).

In terms of assembly, interacts with human protein phosphatase PPP1C.

Its function is as follows. Inhibitor of protein-phosphatase 1 (PP1). Binds to and inhibits PP1 activity. The polypeptide is Protein phosphatase 1 regulatory inhibitor subunit PPP1R7 homolog (Arabidopsis thaliana (Mouse-ear cress)).